A 2339-amino-acid chain; its full sequence is DNA-directed RNA polymerase III subunit RPC1 (2339 aa).

Positions 88, 91, 98, 101, 128, 131, and 175 each coordinate Zn(2+). Residues Asp611, Asp613, and Asp615 each coordinate Mg(2+). Residues 955–967 (PTEFFFHTMSGRE) are bridging helix. Disordered stretches follow at residues 1503 to 1557 (EKRK…NNYY) and 2038 to 2079 (LKSE…DSDR). Over residues 1509–1520 (PKEEKENFDRNN) the composition is skewed to basic and acidic residues. Over residues 1521-1557 (YKMITDNNNNDNNNNNNDNNNNDNNNNNNNSNNNNYY) the composition is skewed to low complexity. The segment covering 2038-2047 (LKSEKKKDIN) has biased composition (basic and acidic residues). The segment covering 2049 to 2059 (DNNNNDDNNNN) has biased composition (low complexity).

It belongs to the RNA polymerase beta' chain family. Component of the RNA polymerase III (Pol III) complex consisting of 17 subunits.

The protein localises to the nucleus. It catalyses the reaction RNA(n) + a ribonucleoside 5'-triphosphate = RNA(n+1) + diphosphate. Functionally, DNA-dependent RNA polymerase catalyzes the transcription of DNA into RNA using the four ribonucleoside triphosphates as substrates. Largest and catalytic core component of RNA polymerase III which synthesizes small RNAs, such as 5S rRNA and tRNAs. Forms the polymerase active center together with the second largest subunit. A single-stranded DNA template strand of the promoter is positioned within the central active site cleft of Pol III. A bridging helix emanates from RPC1 and crosses the cleft near the catalytic site and is thought to promote translocation of Pol III by acting as a ratchet that moves the RNA-DNA hybrid through the active site by switching from straight to bent conformations at each step of nucleotide addition. The protein is DNA-directed RNA polymerase III subunit RPC1 of Plasmodium falciparum.